Here is a 179-residue protein sequence, read N- to C-terminus: MSKKEEKQEELQEEMEAVDAAGVSEVEVEATEIENLKAELSEMEDKFLRARAEIANMSNRNKNERELLVRYRSQDLGKKILPSIDNLERAMAIEVSDEQGESLKKGISMVLESITVALKEEGIEEIPAMGETFDPNLHQAVQTVPASEETPADTIVEVLQKGYKLQDRVLRPSMVIVAQ.

Positions Met1–Glu10 are enriched in basic and acidic residues. Residues Met1–Val23 form a disordered region.

Belongs to the GrpE family. In terms of assembly, homodimer.

The protein resides in the cytoplasm. Its function is as follows. Participates actively in the response to hyperosmotic and heat shock by preventing the aggregation of stress-denatured proteins, in association with DnaK and GrpE. It is the nucleotide exchange factor for DnaK and may function as a thermosensor. Unfolded proteins bind initially to DnaJ; upon interaction with the DnaJ-bound protein, DnaK hydrolyzes its bound ATP, resulting in the formation of a stable complex. GrpE releases ADP from DnaK; ATP binding to DnaK triggers the release of the substrate protein, thus completing the reaction cycle. Several rounds of ATP-dependent interactions between DnaJ, DnaK and GrpE are required for fully efficient folding. This is Protein GrpE from Enterococcus faecalis (strain ATCC 700802 / V583).